Reading from the N-terminus, the 311-residue chain is Metal-staphylopine import system permease protein CntB (311 aa).

Transmembrane regions (helical) follow at residues 9-29, 105-125, 139-159, 173-193, 237-257, and 274-294; these read IALMFPLVIVVSFMTFLLTYI, LTIISSVMVMITSIILGVVSA, VAFFLTALPSYWIASILIIYV, GPESYILPVIVITIAYAGIYF, IFCMSIPMIMGGLVVIEYIFA, and FPVIQAYVLIVAVLFIVFNTL. Positions 99 to 295 constitute an ABC transmembrane type-1 domain; sequence FMNTLKLTII…VLFIVFNTLA (197 aa).

Belongs to the binding-protein-dependent transport system permease family. As to quaternary structure, the complex is composed of two ATP-binding proteins (CntD and CntF), two transmembrane proteins (CntB and CntC) and a solute-binding protein (CntA).

The protein resides in the cell membrane. In terms of biological role, part of the ABC transporter complex CntABCDF (Opp1) involved in the uptake of metal in complex with the metallophore staphylopine (StP). May be involved in the import of a large array of divalent metals ions such as nickel, cobalt, zinc, copper and iron. Probably responsible for the translocation of the substrate across the membrane. This chain is Metal-staphylopine import system permease protein CntB, found in Staphylococcus aureus (strain Mu50 / ATCC 700699).